The primary structure comprises 388 residues: Mannitol-1-phosphate 5-dehydrogenase (388 aa).

Residue 3–14 (ALHFGAGNIGRG) coordinates NAD(+).

Belongs to the mannitol dehydrogenase family.

It catalyses the reaction D-mannitol 1-phosphate + NAD(+) = beta-D-fructose 6-phosphate + NADH + H(+). This chain is Mannitol-1-phosphate 5-dehydrogenase, found in Buchnera aphidicola subsp. Schizaphis graminum (strain Sg).